A 97-amino-acid chain; its full sequence is Small ribosomal subunit protein bS20 (97 aa).

Belongs to the bacterial ribosomal protein bS20 family.

Its function is as follows. Binds directly to 16S ribosomal RNA. The polypeptide is Small ribosomal subunit protein bS20 (Prochlorococcus marinus (strain AS9601)).